Here is a 230-residue protein sequence, read N- to C-terminus: UPF0173 metal-dependent hydrolase TM1040_1920 (230 aa).

The protein belongs to the UPF0173 family.

In Ruegeria sp. (strain TM1040) (Silicibacter sp.), this protein is UPF0173 metal-dependent hydrolase TM1040_1920.